A 262-amino-acid chain; its full sequence is Phosphate import ATP-binding protein PstB (262 aa).

The ABC transporter domain occupies 16–257 (IDVRNLNFYY…PHRKETEDYI (242 aa)). 48 to 55 (GPSGCGKS) is a binding site for ATP.

Belongs to the ABC transporter superfamily. Phosphate importer (TC 3.A.1.7) family. As to quaternary structure, the complex is composed of two ATP-binding proteins (PstB), two transmembrane proteins (PstC and PstA) and a solute-binding protein (PstS).

The protein localises to the cell inner membrane. It catalyses the reaction phosphate(out) + ATP + H2O = ADP + 2 phosphate(in) + H(+). Part of the ABC transporter complex PstSACB involved in phosphate import. Responsible for energy coupling to the transport system. This Cupriavidus metallidurans (strain ATCC 43123 / DSM 2839 / NBRC 102507 / CH34) (Ralstonia metallidurans) protein is Phosphate import ATP-binding protein PstB.